The chain runs to 221 residues: Cytidylate kinase (221 aa).

Residue 7–15 coordinates ATP; the sequence is GPSASGKSS.

This sequence belongs to the cytidylate kinase family. Type 1 subfamily.

The protein resides in the cytoplasm. It catalyses the reaction CMP + ATP = CDP + ADP. It carries out the reaction dCMP + ATP = dCDP + ADP. The polypeptide is Cytidylate kinase (Borreliella burgdorferi (strain ZS7) (Borrelia burgdorferi)).